A 330-amino-acid chain; its full sequence is Olfactory receptor 5T9 (330 aa).

Over Met1–Val37 the chain is Extracellular. Residue Asn17 is glycosylated (N-linked (GlcNAc...) asparagine). The chain crosses the membrane as a helical span at residues Leu38–Val58. The Cytoplasmic segment spans residues Leu59 to Arg66. The helical transmembrane segment at Leu67 to Thr87 threads the bilayer. The Extracellular portion of the chain corresponds to Val88–Thr111. A disulfide bridge links Cys109 with Cys201. The helical transmembrane segment at Glu112 to Tyr132 threads the bilayer. The Cytoplasmic segment spans residues Asp133 to Ala145. Residues Val146 to Met166 traverse the membrane as a helical segment. The Extracellular segment spans residues His167 to Gln208. Residues Leu209 to Ser229 traverse the membrane as a helical segment. The Cytoplasmic segment spans residues Tyr230–Ile249. Residues Phe250–Met270 form a helical membrane-spanning segment. Residues Tyr271–Asp283 are Extracellular-facing. The chain crosses the membrane as a helical span at residues Met284 to Leu304. At Arg305–Leu330 the chain is on the cytoplasmic side.

It belongs to the G-protein coupled receptor 1 family.

The protein resides in the cell membrane. Its function is as follows. Potential odorant receptor. The sequence is that of Olfactory receptor 5T9 from Mus musculus (Mouse).